Here is a 482-residue protein sequence, read N- to C-terminus: Probable cytosol aminopeptidase (482 aa).

Mn(2+)-binding residues include K251 and D256. The active site involves K263. The Mn(2+) site is built by D274, D333, and E335. R337 is an active-site residue.

This sequence belongs to the peptidase M17 family. The cofactor is Mn(2+).

It is found in the cytoplasm. It catalyses the reaction Release of an N-terminal amino acid, Xaa-|-Yaa-, in which Xaa is preferably Leu, but may be other amino acids including Pro although not Arg or Lys, and Yaa may be Pro. Amino acid amides and methyl esters are also readily hydrolyzed, but rates on arylamides are exceedingly low.. The catalysed reaction is Release of an N-terminal amino acid, preferentially leucine, but not glutamic or aspartic acids.. Its function is as follows. Presumably involved in the processing and regular turnover of intracellular proteins. Catalyzes the removal of unsubstituted N-terminal amino acids from various peptides. This is Probable cytosol aminopeptidase from Acinetobacter baumannii (strain SDF).